Consider the following 118-residue polypeptide: UPF0449 protein C19orf25 (118 aa).

The residue at position 63 (tyrosine 63) is a Phosphotyrosine. Positions 81-109 (NVLRQRCELLQRAGEDLEREVAQMKQAAL) form a coiled coil.

This sequence belongs to the UPF0449 family.

The protein is UPF0449 protein C19orf25 (C19orf25) of Homo sapiens (Human).